Here is a 625-residue protein sequence, read N- to C-terminus: tRNA uridine 5-carboxymethylaminomethyl modification enzyme MnmG (625 aa).

Residues 16–21 (GGGHAG), isoleucine 128, and serine 183 each bind FAD. 275–289 (GPRYCPSIEDKVVRF) serves as a coordination point for NAD(+). Position 372 (glutamine 372) interacts with FAD.

This sequence belongs to the MnmG family. Homodimer. Heterotetramer of two MnmE and two MnmG subunits. The cofactor is FAD.

It localises to the cytoplasm. In terms of biological role, NAD-binding protein involved in the addition of a carboxymethylaminomethyl (cmnm) group at the wobble position (U34) of certain tRNAs, forming tRNA-cmnm(5)s(2)U34. In Protochlamydia amoebophila (strain UWE25), this protein is tRNA uridine 5-carboxymethylaminomethyl modification enzyme MnmG.